Reading from the N-terminus, the 176-residue chain is Inner membrane assembly complex subunit 17 (176 aa).

The N-terminal 28 residues, methionine 1–valine 28, are a transit peptide targeting the mitochondrion. Over tyrosine 29–phenylalanine 98 the chain is Mitochondrial matrix. A helical transmembrane segment spans residues valine 99–tryptophan 121. The Mitochondrial intermembrane segment spans residues lysine 122–phenylalanine 176. The stretch at leucine 123 to asparagine 151 forms a coiled coil. Over residues serine 149–asparagine 163 the composition is skewed to low complexity. Positions serine 149–lysine 168 are disordered.

The protein belongs to the INA17 family. Component of the inner membrane assembly (INA) complex, composed of INA17 and INA22. Interacts with a subset of F(1)F(0)-ATP synthase subunits of the F(1)-domain and the peripheral stalk.

The protein resides in the mitochondrion inner membrane. Component of the INA complex (INAC) that promotes the biogenesis of mitochondrial F(1)F(0)-ATP synthase. INAC facilitates the assembly of the peripheral stalk and promotes the assembly of the catalytic F(1)-domain with the membrane-embedded F(0)-domain. This Zygosaccharomyces rouxii (strain ATCC 2623 / CBS 732 / NBRC 1130 / NCYC 568 / NRRL Y-229) protein is Inner membrane assembly complex subunit 17.